Here is a 188-residue protein sequence, read N- to C-terminus: Accessory gene regulator protein B (188 aa).

Helical transmembrane passes span valine 49–valine 69, leucine 82–phenylalanine 102, valine 104–alanine 124, and tyrosine 163–phenylalanine 183.

The protein belongs to the AgrB family.

The protein resides in the cell membrane. Its function is as follows. Essential for the production of a quorum sensing system signal molecule, the autoinducing peptide (AIP). This quorum sensing system is responsible for the regulation of the expression of virulence factor genes. Involved in the proteolytic processing of AgrD, the precursor of AIP. This chain is Accessory gene regulator protein B, found in Staphylococcus lugdunensis.